We begin with the raw amino-acid sequence, 390 residues long: Protein arginine N-methyltransferase 1.1 (390 aa).

The segment covering Met-1–Asn-10 has biased composition (basic and acidic residues). The segment at Met-1–Thr-59 is disordered. Residues Ala-69 to Arg-390 enclose the SAM-dependent MTase PRMT-type domain. Residues Glu-181 and Glu-190 contribute to the active site.

It belongs to the class I-like SAM-binding methyltransferase superfamily. Protein arginine N-methyltransferase family. Interacts with PRMT12, MBD7 and FIB2.

It is found in the nucleus. Its subcellular location is the cytoplasm. The enzyme catalyses L-arginyl-[protein] + 2 S-adenosyl-L-methionine = N(omega),N(omega)-dimethyl-L-arginyl-[protein] + 2 S-adenosyl-L-homocysteine + 2 H(+). In terms of biological role, methylates (mono and asymmetric dimethylation) the guanidino nitrogens of arginyl residues present in a glycine and arginine-rich domain. Type I arginine methyltransferase active on both histones and non-histone proteins. Required for leaves and flowers development. Mediates the methylation of MBD7 and MED36A. This chain is Protein arginine N-methyltransferase 1.1 (PRMT11), found in Arabidopsis thaliana (Mouse-ear cress).